Consider the following 245-residue polypeptide: Probable phosphatase Spro_1934 (245 aa).

The Zn(2+) site is built by His7, His9, His15, His40, Glu73, His101, His131, Asp192, and His194.

Belongs to the PHP family. Homotrimer. It depends on Zn(2+) as a cofactor.

The protein is Probable phosphatase Spro_1934 of Serratia proteamaculans (strain 568).